A 125-amino-acid polypeptide reads, in one-letter code: Large ribosomal subunit protein bL12 (125 aa).

Belongs to the bacterial ribosomal protein bL12 family. As to quaternary structure, homodimer. Part of the ribosomal stalk of the 50S ribosomal subunit. Forms a multimeric L10(L12)X complex, where L10 forms an elongated spine to which 2 to 4 L12 dimers bind in a sequential fashion. Binds GTP-bound translation factors.

Functionally, forms part of the ribosomal stalk which helps the ribosome interact with GTP-bound translation factors. Is thus essential for accurate translation. This is Large ribosomal subunit protein bL12 from Azorhizobium caulinodans (strain ATCC 43989 / DSM 5975 / JCM 20966 / LMG 6465 / NBRC 14845 / NCIMB 13405 / ORS 571).